The primary structure comprises 249 residues: Benzil reductase ((S)-benzoin forming) (249 aa).

Ile6, Asn87, Tyr154, Lys158, Val189, and Thr191 together coordinate NADP(+). Tyr154 (proton acceptor) is an active-site residue.

This sequence belongs to the short-chain dehydrogenases/reductases (SDR) family.

It localises to the cytoplasm. The enzyme catalyses (S)-benzoin + NADP(+) = benzil + NADPH + H(+). It catalyses the reaction 2-hydroxy-1-phenyl-1-propanone + NADP(+) = 1-phenyl-1,2-propanedione + NADPH + H(+). Inhibited by Cibacron blue 3GA, a general SDR family inhibitor. In terms of biological role, reduces benzil stereospecifically to (S)-benzoin. Can also reduce 1-phenyl-1,2-propanedione, 1,4-naphthoquinone, 1-(4-methyl-phenyl)-2-phenyl-ethane-1,2-dione, 1-(4-fluoro-phenyl)-2-phenyl-ethane-1,2-dione, methyl benzoylformate and p-nitrobenzaldehyde in decreasing order. The protein is Benzil reductase ((S)-benzoin forming) of Bacillus cereus.